Reading from the N-terminus, the 172-residue chain is NADH-quinone oxidoreductase subunit B (172 aa).

[4Fe-4S] cluster contacts are provided by Cys-46, Cys-47, Cys-111, and Cys-141.

Belongs to the complex I 20 kDa subunit family. As to quaternary structure, NDH-1 is composed of 14 different subunits. Subunits NuoB, C, D, E, F, and G constitute the peripheral sector of the complex. It depends on [4Fe-4S] cluster as a cofactor.

It is found in the cell membrane. The catalysed reaction is a quinone + NADH + 5 H(+)(in) = a quinol + NAD(+) + 4 H(+)(out). Functionally, NDH-1 shuttles electrons from NADH, via FMN and iron-sulfur (Fe-S) centers, to quinones in the respiratory chain. The immediate electron acceptor for the enzyme in this species is believed to be a menaquinone. Couples the redox reaction to proton translocation (for every two electrons transferred, four hydrogen ions are translocated across the cytoplasmic membrane), and thus conserves the redox energy in a proton gradient. The sequence is that of NADH-quinone oxidoreductase subunit B from Bacillus cereus (strain G9842).